The chain runs to 61 residues: Alpha-conotoxin PnIB (61 aa).

An N-terminal signal peptide occupies residues 1-21 (MGMRMMFTVFLLVVLATTVVS). A propeptide spanning residues 22 to 44 (FTSDRASDDGNAAASDLIALTIK) is cleaved from the precursor. Intrachain disulfides connect cysteine 46–cysteine 52 and cysteine 47–cysteine 60. The ser-Xaa-Pro motif, crucial for potent interaction with nAChR stretch occupies residues 48–50 (SLP). The residue at position 59 (tyrosine 59) is a Sulfotyrosine. Cysteine amide is present on cysteine 60.

Belongs to the conotoxin A superfamily. Expressed by the venom duct.

It localises to the secreted. In terms of biological role, alpha-conotoxins act on postsynaptic membranes, they bind to the nicotinic acetylcholine receptors (nAChR) and thus inhibit them. This toxin blocks mammalian nAChRs (alpha-7/CHRNA7 &gt; alpha-3-beta-2/CHRNA3-CHRNB2). The sequence is that of Alpha-conotoxin PnIB from Conus pennaceus (Feathered cone).